Here is a 362-residue protein sequence, read N- to C-terminus: Porin Omp2b (362 aa).

Positions 1–22 are cleaved as a signal peptide; the sequence is MNIKSLLLGSAAALVAASGAQA.

This sequence belongs to the alphaproteobacteria porin family. Homotrimer.

The protein localises to the cell outer membrane. Its function is as follows. Forms passive diffusion pores that allow small molecular weight hydrophilic materials across the outer membrane. The sequence is that of Porin Omp2b (omp2b) from Brucella abortus (strain S19).